A 936-amino-acid polypeptide reads, in one-letter code: Phosphoenolpyruvate carboxylase (936 aa).

Active-site residues include His-155 and Lys-595.

This sequence belongs to the PEPCase type 1 family. As to quaternary structure, homotetramer. The cofactor is Mg(2+). Mn(2+) serves as cofactor.

It catalyses the reaction oxaloacetate + phosphate = phosphoenolpyruvate + hydrogencarbonate. Its activity is regulated as follows. Exhibits positive allosteric property with acetyl-CoA and fructose 1,6-bisphosphate, and a negative one with L-aspartate and L-malate. Forms oxaloacetate, a four-carbon dicarboxylic acid source for the tricarboxylic acid cycle. This Rhodothermus marinus (Rhodothermus obamensis) protein is Phosphoenolpyruvate carboxylase (ppc).